Consider the following 55-residue polypeptide: Large ribosomal subunit protein bL33c (55 aa).

It belongs to the bacterial ribosomal protein bL33 family.

The protein localises to the plastid. It is found in the chloroplast. The protein is Large ribosomal subunit protein bL33c of Emiliania huxleyi (Coccolithophore).